Here is a 316-residue protein sequence, read N- to C-terminus: Membrane protein UL148 (316 aa).

A signal peptide spans 1–20 (MLRLLFTLVLLALYGPSVDA). A helical transmembrane segment spans residues 286-308 (FIVQYLNTLLITMMAAIWARVLI).

As to quaternary structure, interacts with host SEL1L.

Its subcellular location is the host endoplasmic reticulum membrane. Chaperone protein that plays an important role in HCMV tropism. Cooperates with UL116 to regulate the abundance of gH-gL complexes in virion. Favors the incorporation of gL into virions once UL116 has regulated the early folding steps of virion assembly. Interacts with the host ERAD machinery and slows gO decay which would otherwise be constitutively degraded. Reorganizes the host endoplasmic reticulum and activates the unfolded protein response. Additionally, plays a role in the evasion of antiviral immune response by down-regulating cell surface expression of host CD58. Mechanistically, interacts with host CD58 and retains its immature form intracellularly. The capacity to cause endoplasmic reticulum reorganization and the intracellular retention of host CD58 are functionally independent properties. The protein is Membrane protein UL148 (UL148) of Human cytomegalovirus (strain Merlin) (HHV-5).